Consider the following 460-residue polypeptide: tRNA modification GTPase MnmE (460 aa).

3 residues coordinate (6S)-5-formyl-5,6,7,8-tetrahydrofolate: arginine 23, glutamate 86, and arginine 126. The 160-residue stretch at 222–381 (GLSTAIIGRP…LEAAIASLFF (160 aa)) folds into the TrmE-type G domain. Asparagine 232 provides a ligand contact to K(+). Residues 232–237 (NVGKSS), 251–257 (TDIAGTT), and 276–279 (DTAG) each bind GTP. Position 236 (serine 236) interacts with Mg(2+). K(+) contacts are provided by threonine 251, isoleucine 253, and threonine 256. A Mg(2+)-binding site is contributed by threonine 257. A (6S)-5-formyl-5,6,7,8-tetrahydrofolate-binding site is contributed by lysine 460.

Belongs to the TRAFAC class TrmE-Era-EngA-EngB-Septin-like GTPase superfamily. TrmE GTPase family. In terms of assembly, homodimer. Heterotetramer of two MnmE and two MnmG subunits. K(+) serves as cofactor.

Its subcellular location is the cytoplasm. Functionally, exhibits a very high intrinsic GTPase hydrolysis rate. Involved in the addition of a carboxymethylaminomethyl (cmnm) group at the wobble position (U34) of certain tRNAs, forming tRNA-cmnm(5)s(2)U34. The sequence is that of tRNA modification GTPase MnmE from Exiguobacterium sibiricum (strain DSM 17290 / CCUG 55495 / CIP 109462 / JCM 13490 / 255-15).